A 732-amino-acid chain; its full sequence is Small conductance calcium-activated potassium channel protein 3 (732 aa).

Residues 1 to 11 (MDTSGHFHDSG) are compositionally biased toward basic and acidic residues. 2 disordered regions span residues 1–82 (MDTS…QQAP) and 103–162 (HSSP…ASPL). Over residues 35-59 (QPPPPSAPPAVPQQPPGPLLQPQPP) the composition is skewed to pro residues. The span at 60–82 (QLQQQQQQQQQQQQQQQQQQQAP) shows a compositional bias: low complexity. Residues 113–133 (NSANSTAILHPSSRQGSQLNL) are compositionally biased toward polar residues. Positions 139–148 (GHSPSSTATS) are enriched in low complexity. Position 168 is a phosphoserine (serine 168). The segment covering 241–257 (THNHQHAGTTAGSTTFP) has biased composition (polar residues). The interval 241–260 (THNHQHAGTTAGSTTFPKAN) is disordered. The chain crosses the membrane as a helical span at residues 289 to 309 (LIFGMFGIVVMVIETELSWGL). The chain crosses the membrane as a helical span at residues 316–336 (FSLALKCLISLSTIILLGLII). The chain crosses the membrane as a helical span at residues 367-387 (ISLEMLVCAIHPIPGEYKFFW). A helical membrane pass occupies residues 406-426 (IILSIPMFLRLYLIARVMLLH). The helical transmembrane segment at 455-475 (LMTICPGTVLLVFSISLWIIA) threads the bilayer. An intramembrane region (pore-forming) is located at residues 495–515 (FLGAMWLISITFLSIGYGDMV). Residues 524–544 (VCLLTGIMGAGCTALVVAVVA) form a helical membrane-spanning segment. Positions 562–638 (DTQLTKRIKN…LVDLSKMQNV (77 aa)) are calmodulin-binding. Residues 643 to 670 (ITELNDRSEDLEKQIGSLESKLEHLTAS) adopt a coiled-coil conformation. The disordered stretch occupies residues 704–732 (GTSHAPPSDSPIGISSTSFPTPYTSSSSC). Residues 718–732 (SSTSFPTPYTSSSSC) show a composition bias toward low complexity.

It belongs to the potassium channel KCNN family. KCa2.3/KCNN3 subfamily. Homodimer. Heteromultimer with KCNN2 or KCNN1; this modulates plasma membrane expression and consequently the small conductance calcium-activated potassium channel activity. The complex is composed of 4 channel subunits each of which binds to a calmodulin subunit which regulates the channel activity through calcium-binding. Interacts with CALM1.

The protein localises to the cell membrane. It localises to the cytoplasm. It is found in the myofibril. The protein resides in the sarcomere. Its subcellular location is the z line. The catalysed reaction is K(+)(in) = K(+)(out). With respect to regulation, inhibited by bee venom neurotoxin apamin. Its function is as follows. Small conductance calcium-activated potassium channel that mediates the voltage-independent transmembrane transfer of potassium across the cell membrane through a constitutive interaction with calmodulin which binds the intracellular calcium allowing its opening. The current is characterized by a voltage-independent activation, an intracellular calcium concentration increase-dependent activation and a single-channel conductance of 10 picosiemens. Also presents an inwardly rectifying current, thus reducing its already small outward conductance of potassium ions, which is particularly the case when the membrane potential displays positive values, above + 20 mV. Activation is followed by membrane hyperpolarization. Thought to regulate neuronal excitability by contributing to the slow component of synaptic afterhyperpolarization. The polypeptide is Small conductance calcium-activated potassium channel protein 3 (Rattus norvegicus (Rat)).